The following is a 65-amino-acid chain: Putative beta-neurotoxin RjAa8 (65 aa).

Residues 1 to 64 (KEGYPMGRDG…VWDSSTNKCG (64 aa)) form the LCN-type CS-alpha/beta domain. Intrachain disulfides connect Cys-11–Cys-63, Cys-15–Cys-37, Cys-22–Cys-44, and Cys-26–Cys-46.

This sequence belongs to the long (4 C-C) scorpion toxin superfamily. Sodium channel inhibitor family. Beta subfamily. In terms of tissue distribution, expressed by the venom gland.

The protein localises to the secreted. In terms of biological role, beta toxins bind voltage-independently at site-4 of sodium channels (Nav) and shift the voltage of activation toward more negative potentials thereby affecting sodium channel activation and promoting spontaneous and repetitive firing. The chain is Putative beta-neurotoxin RjAa8 from Rhopalurus junceus (Caribbean blue scorpion).